The primary structure comprises 209 residues: Imidazole glycerol phosphate synthase subunit HisH (209 aa).

In terms of domain architecture, Glutamine amidotransferase type-1 spans 1–205 (MIAIIDYGMG…QGVVEAWKSS (205 aa)). Cys79 serves as the catalytic Nucleophile. Catalysis depends on residues His180 and Glu182.

In terms of assembly, heterodimer of HisH and HisF.

The protein localises to the cytoplasm. It catalyses the reaction 5-[(5-phospho-1-deoxy-D-ribulos-1-ylimino)methylamino]-1-(5-phospho-beta-D-ribosyl)imidazole-4-carboxamide + L-glutamine = D-erythro-1-(imidazol-4-yl)glycerol 3-phosphate + 5-amino-1-(5-phospho-beta-D-ribosyl)imidazole-4-carboxamide + L-glutamate + H(+). The catalysed reaction is L-glutamine + H2O = L-glutamate + NH4(+). It functions in the pathway amino-acid biosynthesis; L-histidine biosynthesis; L-histidine from 5-phospho-alpha-D-ribose 1-diphosphate: step 5/9. Its function is as follows. IGPS catalyzes the conversion of PRFAR and glutamine to IGP, AICAR and glutamate. The HisH subunit catalyzes the hydrolysis of glutamine to glutamate and ammonia as part of the synthesis of IGP and AICAR. The resulting ammonia molecule is channeled to the active site of HisF. This is Imidazole glycerol phosphate synthase subunit HisH from Bacillus cereus (strain B4264).